A 948-amino-acid polypeptide reads, in one-letter code: Non-lysosomal glucosylceramidase (948 aa).

Topologically, residues M1–S736 are extracellular. A compositionally biased stretch (basic and acidic residues) spans S177–K195. The tract at residues S177–Q197 is disordered. Residue N200 is glycosylated (N-linked (GlcNAc...) asparagine). S214 is modified (phosphoserine). N-linked (GlcNAc...) asparagine glycans are attached at residues N288, N555, and N629. S667 and S669 each carry phosphoserine. The N-linked (GlcNAc...) asparagine glycan is linked to N673. A helical transmembrane segment spans residues G737 to L753. Topologically, residues D754–D948 are cytoplasmic.

The protein belongs to the non-lysosomal glucosylceramidase family.

Its subcellular location is the cell membrane. The catalysed reaction is a beta-D-glucosyl-(1&lt;-&gt;1')-N-acylsphing-4-enine + H2O = an N-acylsphing-4-enine + D-glucose. Functionally, non-lysosomal glucosylceramidase that catalyzes the conversion of glucosylceramide to free glucose and ceramide. The chain is Non-lysosomal glucosylceramidase from Drosophila melanogaster (Fruit fly).